Consider the following 484-residue polypeptide: BPI fold-containing family B member 1 (484 aa).

Positions 1 to 21 (MAGPWTFTLLCGLLAATLIQA) are cleaved as a signal peptide. N-linked (GlcNAc...) asparagine glycosylation occurs at Asn48. Cys158 and Cys201 are disulfide-bonded. Asn264 and Asn401 each carry an N-linked (GlcNAc...) asparagine glycan.

Belongs to the BPI/LBP/Plunc superfamily. Plunc family. Detected in duodenum mucosal crypts of cholera patients, near Paneth cells (at protein level). Detected in trachea, nasal septal epithelium and lung.

The protein localises to the secreted. Functionally, may play a role in innate immunity in mouth, nose and lungs. Binds bacterial lipopolysaccharide (LPS) and modulates the cellular responses to LPS. The protein is BPI fold-containing family B member 1 (BPIFB1) of Homo sapiens (Human).